The primary structure comprises 760 residues: Amyloid beta precursor protein binding family B member 2 (760 aa).

Phosphoserine is present on residues Ser-123 and Ser-160. Disordered stretches follow at residues 177–295 (QNLG…LPPG) and 324–351 (PADL…KQPW). 2 stretches are compositionally biased toward polar residues: residues 212–230 (NKPQ…SSSP) and 261–275 (SWTT…PSSP). A WW domain is found at 290 to 322 (PDLPPGWKRVNDIAGTYYWHIPTGTTQWERPVS). Phosphoserine occurs at positions 334, 409, and 412. PID domains are found at residues 413–580 (DPEA…LQVD) and 586–738 (TELV…VTTN).

In terms of assembly, interacts (via C-terminus) with APP (via C-terminus). Interacts with APLP2 (via cytoplasmic domain). In terms of tissue distribution, expressed in the brain, retinal lens and muscle cells (at protein level).

The protein resides in the endoplasmic reticulum. It is found in the golgi apparatus. The protein localises to the early endosome. Functionally, plays a role in the maintenance of lens transparency, and may also play a role in muscle cell strength. Involved in hippocampal neurite branching and neuromuscular junction formation, as a result plays a role in spatial memory functioning. Activates transcription of APP. The polypeptide is Amyloid beta precursor protein binding family B member 2 (Mus musculus (Mouse)).